Reading from the N-terminus, the 267-residue chain is 4-hydroxy-tetrahydrodipicolinate reductase (267 aa).

NAD(+) contacts are provided by residues 12-17 (GPRGRM), 100-102 (GTT), and 126-129 (APNF). Residue His-156 is the Proton donor/acceptor of the active site. Residue His-157 participates in (S)-2,3,4,5-tetrahydrodipicolinate binding. Lys-160 functions as the Proton donor in the catalytic mechanism. 166 to 167 (GT) is a (S)-2,3,4,5-tetrahydrodipicolinate binding site.

Belongs to the DapB family.

The protein localises to the cytoplasm. It catalyses the reaction (S)-2,3,4,5-tetrahydrodipicolinate + NAD(+) + H2O = (2S,4S)-4-hydroxy-2,3,4,5-tetrahydrodipicolinate + NADH + H(+). The enzyme catalyses (S)-2,3,4,5-tetrahydrodipicolinate + NADP(+) + H2O = (2S,4S)-4-hydroxy-2,3,4,5-tetrahydrodipicolinate + NADPH + H(+). The protein operates within amino-acid biosynthesis; L-lysine biosynthesis via DAP pathway; (S)-tetrahydrodipicolinate from L-aspartate: step 4/4. In terms of biological role, catalyzes the conversion of 4-hydroxy-tetrahydrodipicolinate (HTPA) to tetrahydrodipicolinate. The protein is 4-hydroxy-tetrahydrodipicolinate reductase of Bacillus subtilis (strain 168).